A 622-amino-acid chain; its full sequence is uncharacterized protein (622 aa).

An N-terminal signal peptide occupies residues 1–20 (MKIKAVAIFLSLLMIISLFS).

This is an uncharacterized protein from Methanocaldococcus jannaschii (strain ATCC 43067 / DSM 2661 / JAL-1 / JCM 10045 / NBRC 100440) (Methanococcus jannaschii).